Here is a 258-residue protein sequence, read N- to C-terminus: Uridylate cyclase (258 aa).

Positions 50-190 constitute a Guanylate cyclase domain; sequence AAIFIDLRGS…DVVNKASKMC (141 aa). Phe53 is a binding site for a ribonucleoside 5'-triphosphate. Mn(2+)-binding residues include Asp55 and Asp102.

It belongs to the adenylyl cyclase class-4/guanylyl cyclase family. Pyrimidine cyclase subfamily. In terms of assembly, homodimer. The cofactor is Mn(2+).

Its subcellular location is the cytoplasm. It catalyses the reaction UTP = 3',5'-cyclic UMP + diphosphate. Pycsar (pyrimidine cyclase system for antiphage resistance) provides immunity against bacteriophage. The pyrimidine cyclase (PycC) synthesizes cyclic nucleotides in response to infection; these serve as specific second messenger signals. The signals activate the adjacent effector, leading to bacterial cell death and abortive phage infection. A clade C Pycsar system. In terms of biological role, the pyrimidine cyclase gene of a two-gene Pycsar system, weakly generates cyclic UMP (cUMP) from UTP, has little to no activity on ATP, CTP or GTP. Expression of this and adjacent effector GmPycTM (AC P0DV43) probably confers resistance to bacteriophage. The genes are probably only expressed in response to bacteriophage infection. This Gulbenkiania mobilis protein is Uridylate cyclase.